We begin with the raw amino-acid sequence, 521 residues long: MAASIGALKSSPSSHNCINERRNDSTRAISSRNLSFSSSHLAGDKLMPVSSLRSQGVRFNVRRSPLIVSPKAVSDSQNSQTCLDPDASRSVLGIILGGGAGTRLYPLTKKRAKPAVPLGANYRLIDIPVSNCLNSNISKIYVLTQFNSASLNRHLSRAYASNMGEYKNEGFVEVLAAQQSPENPDWFQGTADAVRQYLWLFEEHNVLEYLILAGDHLYRMDYEKFIQAHRETDADITVAALPMDEKRATAFGLMKIDEEGRIIEFAEKPQGEQLQAMKVDTTILGLDDKRAKEMPFIASMGIYVISKDVMLNLLRDKFPGANDFGSEVIPGATSLGMRVQAYLYDGYWEDIGTIEAFYNANLGITKKPVPDFSFYDRSAPIYTQPRYLPPSKMLDADVTDSVIGEGCVIKNCKIHHSVVGLRSCISEGAIIEDSLLMGADYYETDAERKLLAAKGSVPIGIGKNCLYKRAIIDKNARIGDNVKIINKDNVQEAARETDGYFIKSGIVTVIKDALIPSGIVI.

A disordered region spans residues methionine 1–aspartate 24. Residues methionine 1–alanine 72 constitute a chloroplast transit peptide.

It belongs to the bacterial/plant glucose-1-phosphate adenylyltransferase family. As to quaternary structure, heterotetramer.

The protein localises to the plastid. Its subcellular location is the chloroplast. The enzyme catalyses alpha-D-glucose 1-phosphate + ATP + H(+) = ADP-alpha-D-glucose + diphosphate. Its pathway is glycan biosynthesis; starch biosynthesis. With respect to regulation, activated by 3'phosphoglycerate, inhibited by orthophosphate. Allosteric regulation. This protein plays a role in synthesis of starch. It catalyzes the synthesis of the activated glycosyl donor, ADP-glucose from Glc-1-P and ATP. In Solanum lycopersicum (Tomato), this protein is Glucose-1-phosphate adenylyltransferase small subunit, chloroplastic.